The sequence spans 279 residues: ATP synthase gamma chain (279 aa).

This sequence belongs to the ATPase gamma chain family. In terms of assembly, F-type ATPases have 2 components, CF(1) - the catalytic core - and CF(0) - the membrane proton channel. CF(1) has five subunits: alpha(3), beta(3), gamma(1), delta(1), epsilon(1). CF(0) has three main subunits: a, b and c.

It localises to the cell membrane. Its function is as follows. Produces ATP from ADP in the presence of a proton gradient across the membrane. The gamma chain is believed to be important in regulating ATPase activity and the flow of protons through the CF(0) complex. The chain is ATP synthase gamma chain from Mycoplasma pneumoniae (strain ATCC 29342 / M129 / Subtype 1) (Mycoplasmoides pneumoniae).